The following is a 304-amino-acid chain: Protein INO2 (304 aa).

The bHLH domain occupies 236-290 (VRKWKHVQMEKIRRINTKEAFERLIKSVRTPPKENGKRIPKHILLTCVMNDIKSI).

Efficient DNA binding requires dimerization with another bHLH protein.

It is found in the nucleus. Its function is as follows. Positive regulatory factor required for depression of the coregulated phospholipid biosynthetic enzymes. Also involved in the expression of ITR1. The protein is Protein INO2 (INO2) of Saccharomyces cerevisiae (strain ATCC 204508 / S288c) (Baker's yeast).